A 509-amino-acid chain; its full sequence is Cytochrome P450 monooxygenase traB (509 aa).

The helical transmembrane segment at 8–28 threads the bilayer; it reads LVELVSITGGLIVLFIAYTGF. Heme is bound at residue cysteine 453.

It belongs to the cytochrome P450 family. Heme is required as a cofactor.

It is found in the membrane. The protein operates within secondary metabolite biosynthesis. Cytochrome P450 monooxygenase; part of the tra gene cluster that produces terrestric acid. The clavatol biosynthesis cluster cla and the terrestric acid cluster tra are both involved in the production of peniphenones and penilactones. The non-reducing PKS claF is responsible for the formation of clavatol from successive condensations of 3 malonyl-CoA units, presumably with a simple acetyl-CoA starter unit, and 2 methylation steps. The esterase claE probably collaborates with claF by catalyzing the hydrolysis of ACP-bound acyl intermediates to free the ACP from stalled intermediates. The clavatol oxidase claD then converts clavatol to hydroxyclavatol. Spontaneous dehydration of hydroxyclavatol leads to the accumulation of the highly active ortho-quinone methide. On the other hand, the PKS-NRPS hybrid traA is involved in the formation of crustosic acid, with the help of traB and traD. The polyketide synthase module (PKS) of traA is responsible for the synthesis of the polyketide backbone via the condensation of an acetyl-CoA starter unit with 3 malonyl-CoA units. The downstream nonribosomal peptide synthetase (NRPS) module then amidates the carboxyl end of the polyketide with L-malic acid. Because traA lacks a designated enoylreductase (ER) domain, the required activity is provided the enoyl reductase traG. Crustosic acid undergoes decarboxylation and isomerization to the terrestric acid, catalyzed by the 2-oxoglutarate-dependent dioxygenase traH. Both acids are further converted to the 2 gamma-butyrolactones (R)-5-methyltetronic acid and (S)-5-carboxylmethyltetronic acid, with involvement of the cytochrome P450 monooxygenase claJ. Spontaneous addition of the methide to these gamma-butyrolactones leads to peniphenone D and penilactone D, which undergo again stereospecific attacking by methide to give penilactones A and B. The sequence is that of Cytochrome P450 monooxygenase traB from Penicillium crustosum (Blue mold fungus).